The following is a 303-amino-acid chain: Lipoyl synthase (303 aa).

Residues Cys-34, Cys-39, Cys-45, Cys-60, Cys-64, Cys-67, and Ser-273 each contribute to the [4Fe-4S] cluster site. Positions 46-262 (WSKKHATVMI…ERVARTKGFL (217 aa)) constitute a Radical SAM core domain.

This sequence belongs to the radical SAM superfamily. Lipoyl synthase family. The cofactor is [4Fe-4S] cluster.

The protein resides in the cytoplasm. The catalysed reaction is [[Fe-S] cluster scaffold protein carrying a second [4Fe-4S](2+) cluster] + N(6)-octanoyl-L-lysyl-[protein] + 2 oxidized [2Fe-2S]-[ferredoxin] + 2 S-adenosyl-L-methionine + 4 H(+) = [[Fe-S] cluster scaffold protein] + N(6)-[(R)-dihydrolipoyl]-L-lysyl-[protein] + 4 Fe(3+) + 2 hydrogen sulfide + 2 5'-deoxyadenosine + 2 L-methionine + 2 reduced [2Fe-2S]-[ferredoxin]. Its pathway is protein modification; protein lipoylation via endogenous pathway; protein N(6)-(lipoyl)lysine from octanoyl-[acyl-carrier-protein]: step 2/2. Functionally, catalyzes the radical-mediated insertion of two sulfur atoms into the C-6 and C-8 positions of the octanoyl moiety bound to the lipoyl domains of lipoate-dependent enzymes, thereby converting the octanoylated domains into lipoylated derivatives. This is Lipoyl synthase from Rickettsia bellii (strain OSU 85-389).